The following is an 816-amino-acid chain: Phosphatidylinositol 4-kinase beta (816 aa).

Disordered regions lie at residues 1 to 29 (MGDM…GGSL), 99 to 121 (EEED…RRRQ), and 250 to 318 (RKRE…SFSS). N-acetylglycine is present on Gly-2. Residues 2 to 68 (GDMVVEPATL…VKLLHGGVAI (67 aa)) form an interaction with ACBD3 region. Residues 10-29 (TLKPTSEPTPSPSGNNGGSL) are compositionally biased toward low complexity. The region spanning 61 to 242 (LLHGGVAISS…GTKLRKLILS (182 aa)) is the PIK helical domain. A Phosphoserine modification is found at Ser-258. Phosphothreonine is present on Thr-263. A phosphoserine mark is found at Ser-266, Ser-275, Ser-277, Ser-284, and Ser-294. 2 stretches are compositionally biased toward polar residues: residues 278-297 (DATA…SNPK) and 306-318 (SSST…SFSS). Position 428 is a phosphoserine (Ser-428). Thr-438 carries the post-translational modification Phosphothreonine. The residue at position 511 (Ser-511) is a Phosphoserine. Phosphothreonine is present on residues Thr-517 and Thr-519. The PI3K/PI4K catalytic domain maps to 535–801 (EPWQEKVRRI…MVDGSMRSIT (267 aa)). A G-loop region spans residues 541 to 547 (VRRIREG). Residues 668 to 676 (QVKDRHNGN) are catalytic loop. The segment at 687 to 711 (HIDFGFILSSSPRNLGFETSAFKLT) is activation loop.

This sequence belongs to the PI3/PI4-kinase family. Type III PI4K subfamily. In terms of assembly, interacts with ARF1 and ARF3 in the Golgi complex, but not with ARF4, ARF5 or ARF6. Interacts with NCS1/FREQ in a calcium-independent manner. Interacts with CALN1/CABP8 and CALN2/CABP7; in a calcium-dependent manner; this interaction competes with NCS1/FREQ binding. Interacts with ACBD3. Interacts with ARMH3, YWHAB, YWHAE, YWHAG, YWHAH, YWHAQ, YWHAZ and SFN. Interacts with GGA2 (via VHS domain); the interaction is important for PI4KB location at the Golgi apparatus membrane. Interacts with ATG9A. The cofactor is Mg(2+). Mn(2+) is required as a cofactor. In terms of tissue distribution, strongly expressed in brain, kidney, lung, small intestine, uterus and adrenal gland. Weaker expression in liver, heart, skeletal muscle, thymus and testis. Not detected in spleen.

It is found in the golgi apparatus. The protein resides in the endomembrane system. The protein localises to the mitochondrion outer membrane. It localises to the rough endoplasmic reticulum membrane. Its subcellular location is the golgi apparatus membrane. It catalyses the reaction a 1,2-diacyl-sn-glycero-3-phospho-(1D-myo-inositol) + ATP = a 1,2-diacyl-sn-glycero-3-phospho-(1D-myo-inositol 4-phosphate) + ADP + H(+). With respect to regulation, inhibited by wortmannin. Increased kinase activity upon interaction with NCS1/FREQ. Phosphorylates phosphatidylinositol (PI) in the first committed step in the production of the second messenger inositol-1,4,5,-trisphosphate (PIP). May regulate Golgi disintegration/reorganization during mitosis, possibly via its phosphorylation. Involved in Golgi-to-plasma membrane trafficking. May play an important role in the inner ear development. This chain is Phosphatidylinositol 4-kinase beta (Pi4kb), found in Rattus norvegicus (Rat).